Reading from the N-terminus, the 526-residue chain is Peptide chain release factor 3 (526 aa).

A tr-type G domain is found at 8–277; sequence SKRRTFAIIS…GLTRWAPAPQ (270 aa). Residues 17–24, 85–89, and 139–142 each bind GTP; these read SHPDAGKT, DTPGH, and NKLD.

Belongs to the TRAFAC class translation factor GTPase superfamily. Classic translation factor GTPase family. PrfC subfamily.

It is found in the cytoplasm. Functionally, increases the formation of ribosomal termination complexes and stimulates activities of RF-1 and RF-2. It binds guanine nucleotides and has strong preference for UGA stop codons. It may interact directly with the ribosome. The stimulation of RF-1 and RF-2 is significantly reduced by GTP and GDP, but not by GMP. The chain is Peptide chain release factor 3 from Vibrio atlanticus (strain LGP32) (Vibrio splendidus (strain Mel32)).